The chain runs to 87 residues: MTILSAITSISRPNKISKSVISSNGGSSLSMGSNSVSCYNACGGGSSYSYSSSYSGSGLDYSYKANYSSSTGYNSSVVIASSTCHCS.

It belongs to the hssA/B family.

This is HssA/B-like protein 54 (hssl54) from Dictyostelium discoideum (Social amoeba).